Consider the following 1529-residue polypeptide: Ras guanine nucleotide exchange factor B (1529 aa).

A coiled-coil region spans residues 135 to 186; the sequence is ISNIEKQLSNLVNLKSNTTEQTDRKYKTNLIDFKESIIQLEKDCKNLLKQSN. Disordered regions lie at residues 290–357, 576–600, 680–724, 847–948, and 1168–1206; these read INTL…ISIN, TTTT…KSSH, KRNT…HIQQ, MGKE…NHNR, and QPPQ…STNL. Composition is skewed to low complexity over residues 576–591, 683–724, and 853–887; these read TTTT…TTTN, TSSG…HIQQ, and NSNT…NNNE. Coiled coils occupy residues 722 to 798 and 871 to 898; these read IQQI…LNRK and NNNN…ETNK. Basic and acidic residues predominate over residues 888–898; that stretch reads NKNENKNETNK. Low complexity-rich tracts occupy residues 906–916, 924–940, 1168–1187, and 1197–1206; these read SSTSTLSSSTT, SSTN…LLPP, QPPQ…TTQP, and QPQLQQSTNL. The N-terminal Ras-GEF domain occupies 1075–1205; the sequence is FYRSIKYASL…PQPQLQQSTN (131 aa). Residues 1282-1517 form the Ras-GEF domain; sequence SSTDIAEQLT…YEQSILLEPK (236 aa).

It localises to the cytoplasm. In terms of biological role, promotes the exchange of Ras-bound GDP by GTP. Involved in phagocytosis, fluid-phase endocytosis, regulation of macropinocytosis and control of cell movement. This Dictyostelium discoideum (Social amoeba) protein is Ras guanine nucleotide exchange factor B (gefB).